A 651-amino-acid chain; its full sequence is MGLKKFFKIKPPEEATPEQNKDTLMELGISVKNPSKKRKEKFAAYGKFANDKAEDKVYAPPGYEQYARPQDELEDLNASPLDANANEATAGSNRGSSGTQDLGNGAESNSMQDPYAIENDDYRYDDDPYARFQANKSNGRGSVNAAPYGDYGGGYNGTSLNSYNNDGPYSNQNTSNSWVNANGRNSLNHSNSTLNVGPSRQTRQPPVSTSTNSLSLDQRSPLANPMQEKRNPYADMNSYGGAYDSNTNRSSGTRQGSSKNANPYASMANDSYSNGNLNRSANPYSSRSVRQPQSQQAPMTYTPSFIASDEAARNSEVDLNEEPRTGEFDFEEVYADKSAENRAALDEPDLNAVMTNEDSIDLNASEVDHSSRQQQQQQWFMDEQQQQQQHFNATNNQYGDQRGYKTFEEIQKEEEARQQQEEDEAVDEIKQEIKFTKQSSVASTRNTLKMAQDAERAGMNTLGMLGHQSEQLNNVEGNLDLMKVQNKVADEKVAELKKLNRSILAVHVSNPFNSKRRRREREEQLKNRKIEEKLMREQTSQQLSQSTQRIEGAMNANNNISEVRERYQRKNVLEKAKRYQFENDEEDDEMELEIDRNLDQIQQVSNRLKKMALTTGKELDSQQKRLNNIEESTDDLDINLHMNTNRLAGIR.

Disordered regions lie at residues 1-22 (MGLK…QNKD), 53-299 (AEDK…QAPM), and 313-332 (RNSE…DFEE). 2 positions are modified to phosphoserine: Ser-79 and Ser-92. Positions 86 to 112 (NEATAGSNRGSSGTQDLGNGAESNSMQ) are enriched in polar residues. The segment covering 120-129 (DDYRYDDDPY) has biased composition (basic and acidic residues). Polar residues-rich tracts occupy residues 157-218 (GTSL…SLDQ) and 244-284 (DSNT…ANPY). Residues Ser-186, Ser-190, Ser-213, Ser-271, and Ser-273 each carry the phosphoserine modification. The span at 285–296 (SSRSVRQPQSQQ) shows a compositional bias: low complexity. The span at 313 to 327 (RNSEVDLNEEPRTGE) shows a compositional bias: basic and acidic residues. A Phosphoserine modification is found at Ser-315. A Phosphothreonine modification is found at Thr-355. Ser-359 is modified (phosphoserine). T-SNARE coiled-coil homology domains lie at 434–496 (KFTK…VAEL) and 588–650 (DEME…LAGI).

It belongs to the SNAP-25 family. Interacts with SRO7 and SRO77.

In terms of biological role, component of a SNARE complex that may be the effector of SEC4 function in exocytosis. The sequence is that of Protein transport protein SEC9 (SEC9) from Saccharomyces cerevisiae (strain ATCC 204508 / S288c) (Baker's yeast).